The following is a 118-amino-acid chain: MRTKLLELVEKDQIRTDLPEIREGYNVKVHVRIKEGNKERIQVFEGLVIASYGTGINKSITVRKDSYGVGVERIFKLNSPLIAHIEVTRINKVRRAKLYYMRDLKGKSARLKEIKKAK.

The protein belongs to the bacterial ribosomal protein bL19 family.

Its function is as follows. This protein is located at the 30S-50S ribosomal subunit interface and may play a role in the structure and function of the aminoacyl-tRNA binding site. The polypeptide is Large ribosomal subunit protein bL19 (Metamycoplasma arthritidis (strain 158L3-1) (Mycoplasma arthritidis)).